A 160-amino-acid polypeptide reads, in one-letter code: Calcium and integrin-binding family member 3 (160 aa).

EF-hand domains are found at residues Lys39 to Met74, Pro76 to Gly111, and Glu117 to Phe152. 10 residues coordinate Ca(2+): Asp89, Asn91, Asp93, Tyr95, Asp100, Asp130, Asp132, Asp134, Arg136, and Asp141.

Monomer and homodimer. Interacts with ITGA2B (via C-terminus cytoplasmic tail region); the interaction is stabilized/increased in a calcium and magnesium-dependent manner. Interacts with TMC1. Expressed in heart, liver and inner ear. In the inner ear, expressed in vestibule and basilar membrane cells. Expressed in megakaryocytes and endothelial cells.

Functionally, acts as an auxiliary subunit of the sensory mechanoelectrical transduction (MET) channel in hair cells. Plays a role in regulating hair cell MET channel localization and function. The chain is Calcium and integrin-binding family member 3 (Cib3) from Mus musculus (Mouse).